The chain runs to 1295 residues: Phosphoribosylformylglycinamidine synthase (1295 aa).

The interval 302 to 327 (APFSGAATGSGGEIRDEGATGRGSKP) is disordered. ATP-binding positions include 306–317 (GAATGSGGEIRD) and Ala677. The Mg(2+) site is built by Asp678, Glu717, Asn721, and Asp884. Residue Ser886 participates in ATP binding. The Glutamine amidotransferase type-1 domain occupies 1042-1295 (MAILREQGVN…MFRNARVYLG (254 aa)). Cys1135 functions as the Nucleophile in the catalytic mechanism. Active-site residues include His1260 and Glu1262.

This sequence in the N-terminal section; belongs to the FGAMS family. As to quaternary structure, monomer.

Its subcellular location is the cytoplasm. The enzyme catalyses N(2)-formyl-N(1)-(5-phospho-beta-D-ribosyl)glycinamide + L-glutamine + ATP + H2O = 2-formamido-N(1)-(5-O-phospho-beta-D-ribosyl)acetamidine + L-glutamate + ADP + phosphate + H(+). It functions in the pathway purine metabolism; IMP biosynthesis via de novo pathway; 5-amino-1-(5-phospho-D-ribosyl)imidazole from N(2)-formyl-N(1)-(5-phospho-D-ribosyl)glycinamide: step 1/2. In terms of biological role, phosphoribosylformylglycinamidine synthase involved in the purines biosynthetic pathway. Catalyzes the ATP-dependent conversion of formylglycinamide ribonucleotide (FGAR) and glutamine to yield formylglycinamidine ribonucleotide (FGAM) and glutamate. This chain is Phosphoribosylformylglycinamidine synthase, found in Pseudoalteromonas atlantica (strain T6c / ATCC BAA-1087).